Reading from the N-terminus, the 132-residue chain is Salivary cystatin-L2 (132 aa).

The N-terminal stretch at Met1–Ala18 is a signal peptide. The 90-residue stretch at Glu28–Asn117 folds into the Cystatin domain. The interval Thr87–Ala131 is required for interaction with mouse ANXA2. Intrachain disulfides connect Cys88–Cys99 and Cys110–Cys129.

This sequence belongs to the cystatin family. In terms of assembly, monomer. Interacts (via loop 2) with mouse ANXA2; the interaction results in reduced activation of mouse NLRC4 inflammasome formation upon Anaplasma phagocytophilum infection. Detected in salivary gland and midgut.

Its subcellular location is the secreted. In terms of biological role, contributes to the suppression of the host's immune response to tick salivary proteins and is important for successful feeding on hosts. Inhibitor of cysteine proteinases. Inhibits host immune responses, probably via its inhibition of host cathepsins. Inhibits host papain (in vitro). Inhibits host cathepsin L (CTSL) (in vitro). Inhibits host cathepsin L2 (CTSV) (in vitro). Attenuates IFN-beta (IFNB1)-triggered JAK/STAT signaling pathway in mouse dendritic cells. Suppresses induction of interferon-stimulated gene IRF7 and production of CXCL10 in lipopolysaccharide (LPS)-activated dendritic cells. Functionally, (Microbial infection) Down-regulates TLR2-mediated host responses to infection by Borrelia burgdorferi and the production of chemokines CCL3 and CXCL10 by host dendritic cells. Enhances infection by the tick-transmitted pathogen B.burgdorferi (in vitro). Its function is as follows. (Microbial infection) Inhibits host inflammatory responses to Anaplasma phagocytophilum infection. Interacts with mouse ANXA2 and suppresses oligomerization of NLRC4, a key component of host inflammasomes that sense A.phagocytophilum infection. Indirectly targets caspase-1 (CASP1) activation and subsequent IL-1beta (IL1B) and IL18 release by inhibiting reactive oxygen species (ROS) production from NADPH oxidase complex in A.phagocytophilum-infected mouse macrophages. (Microbial infection) Promotes replication of tick-borne encephalitis virus in mouse dendritic cells and reduces anti-viral effect of host IFN-beta (IFNB1). This chain is Salivary cystatin-L2, found in Ixodes scapularis (Black-legged tick).